The primary structure comprises 449 residues: MFLLKSIPQVDKFIKNEKFASLPLTLLVQITAEVLQDLRERILKNEIESFSEDELVKKVLQKYKDITKPSLQKIINATGVIVHTNLGRSLIDANAFERVKGIVTSYNNLEYDLEKGKRGERYSHISDAICRLLGCEDVLIVNNNASAVFLILNTFAKQKEVVVSRGELVEIGGSFRVPDVMKQSGAKLVEVGATNKTHLYDYENAISKKTSMLMKVHKSNYSIEGFSSEVEFKELVKLAREKNLIDYYDMGSGHLVNLPYGLDQHEPSVLKYMQENPSLLSFSGDKLLGSVQAGIIVGKKEYIAKLKKNQLLRMLRVDKLTLALLEDSVISVLLNKLDEIPTLKMLFASTCELKENALVLQDAIKDICDCEVLETKTVIGGGTTPNKMIPSIALAIKIDNYKQNKMEKLFRAKNIIGRIENDRFLLDFRTIRKSEIQEIAHVVKEIANV.

Lys-286 is subject to N6-(pyridoxal phosphate)lysine.

The protein belongs to the SelA family. It depends on pyridoxal 5'-phosphate as a cofactor.

The protein localises to the cytoplasm. The enzyme catalyses L-seryl-tRNA(Sec) + selenophosphate + H(+) = L-selenocysteinyl-tRNA(Sec) + phosphate. It functions in the pathway aminoacyl-tRNA biosynthesis; selenocysteinyl-tRNA(Sec) biosynthesis; selenocysteinyl-tRNA(Sec) from L-seryl-tRNA(Sec) (bacterial route): step 1/1. Converts seryl-tRNA(Sec) to selenocysteinyl-tRNA(Sec) required for selenoprotein biosynthesis. The chain is L-seryl-tRNA(Sec) selenium transferase from Sulfurimonas denitrificans (strain ATCC 33889 / DSM 1251) (Thiomicrospira denitrificans (strain ATCC 33889 / DSM 1251)).